Reading from the N-terminus, the 375-residue chain is Queuine tRNA-ribosyltransferase (375 aa).

Catalysis depends on Asp-93, which acts as the Proton acceptor. Residues 93–97 (DSGGF), Asp-147, Gln-191, and Gly-218 each bind substrate. Residues 249–255 (GVGTPLD) are RNA binding. Asp-268 acts as the Nucleophile in catalysis. The RNA binding; important for wobble base 34 recognition stretch occupies residues 273–277 (TRNAR). Zn(2+) is bound by residues Cys-306, Cys-308, Cys-311, and His-337.

Belongs to the queuine tRNA-ribosyltransferase family. As to quaternary structure, homodimer. Within each dimer, one monomer is responsible for RNA recognition and catalysis, while the other monomer binds to the replacement base PreQ1. The cofactor is Zn(2+).

It carries out the reaction 7-aminomethyl-7-carbaguanine + guanosine(34) in tRNA = 7-aminomethyl-7-carbaguanosine(34) in tRNA + guanine. It functions in the pathway tRNA modification; tRNA-queuosine biosynthesis. Functionally, catalyzes the base-exchange of a guanine (G) residue with the queuine precursor 7-aminomethyl-7-deazaguanine (PreQ1) at position 34 (anticodon wobble position) in tRNAs with GU(N) anticodons (tRNA-Asp, -Asn, -His and -Tyr). Catalysis occurs through a double-displacement mechanism. The nucleophile active site attacks the C1' of nucleotide 34 to detach the guanine base from the RNA, forming a covalent enzyme-RNA intermediate. The proton acceptor active site deprotonates the incoming PreQ1, allowing a nucleophilic attack on the C1' of the ribose to form the product. After dissociation, two additional enzymatic reactions on the tRNA convert PreQ1 to queuine (Q), resulting in the hypermodified nucleoside queuosine (7-(((4,5-cis-dihydroxy-2-cyclopenten-1-yl)amino)methyl)-7-deazaguanosine). This is Queuine tRNA-ribosyltransferase from Nitratidesulfovibrio vulgaris (strain DP4) (Desulfovibrio vulgaris).